The following is a 518-amino-acid chain: Cytochrome P450 monooxygenase psoD (518 aa).

Cysteine 442 lines the heme pocket.

The protein belongs to the cytochrome P450 family. The cofactor is heme.

Its pathway is secondary metabolite biosynthesis. In terms of biological role, cytochrome P450 monooxygenase; part of the gene cluster that mediates the biosynthesis of pseurotin A, a competitive inhibitor of chitin synthase and an inducer of nerve-cell proliferation. The PKS-NRPS hybrid synthetase psoA is responsible for the biosynthesis of azaspirene, one of the first intermediates having the 1-oxa-7-azaspiro[4,4]-non-2-ene-4,6-dione core of pseurotin, via condensation of one acetyl-CoA, 4 malonyl-CoA, and a L-phenylalanine molecule. The dual-functional monooxygenase/methyltransferase psoF seems to be involved in the addition of the C3 methyl group onto the pseurotin scaffold. Azaspirene is then converted to synerazol through 4 steps including oxidation of C17 by the cytochrome P450 monooxygenase psoD, O-methylation of the hydroxy group of C8 by the methyltransferase psoC, and the trans-to-cis isomerization of the C13 olefin by the glutathione S-transferase psoE. The fourth step of synerazol production is performed by the dual-functional monooxygenase/methyltransferase psoF which seems to catalyze the epoxidation of the intermediate deepoxy-synerazol. Synerazol can be attacked by a water molecule nonenzymatically at two different positions to yield two diol products, pseurotin A and pseurotin D. The protein is Cytochrome P450 monooxygenase psoD of Aspergillus fumigatus (strain ATCC MYA-4609 / CBS 101355 / FGSC A1100 / Af293) (Neosartorya fumigata).